Here is a 1035-residue protein sequence, read N- to C-terminus: NACHT, LRR and PYD domains-containing protein 3 (1035 aa).

One can recognise a Pyrin domain in the interval 1–93 (MKMMSVRCKL…WEKAKKDQPE (93 aa)). Serine 5 bears the Phosphoserine mark. A disulfide bond links cysteine 8 and cysteine 106. A Phosphotyrosine modification is found at tyrosine 13. A lipid anchor (S-palmitoyl cysteine) is attached at cysteine 128. The segment at 129–132 (KKKK) is required for binding to phosphatidylinositol 4-phosphate (PtdIns4P). Tyrosine 134 and tyrosine 138 each carry phosphotyrosine. Residues 138 to 208 (YRRHVRSRFY…SSLKLELLFE (71 aa)) form the FISNA domain. At serine 159 the chain carries Phosphoserine. The residue at position 166 (tyrosine 166) is a Phosphotyrosine. Threonine 167 is an ATP binding site. Serine 199 is modified (phosphoserine). The NACHT domain maps to 218 to 534 (HTVVFQGAAG…EFFAAMYYLL (317 aa)). 224-231 (GAAGIGKT) contacts ATP. Serine 263 and serine 293 each carry phosphoserine. Lysine 322 is covalently cross-linked (Glycyl lysine isopeptide (Lys-Gly) (interchain with G-Cter in ubiquitin)). Phosphoserine is present on serine 332. Residues 353-357 (LEKLQ) carry the KFERQ-like motif 1 motif. Residue lysine 428 forms a Glycyl lysine isopeptide (Lys-Gly) (interchain with G-Cter in ubiquitin) linkage. Residue histidine 520 participates in ATP binding. A KFERQ-like motif 2 motif is present at residues 603–607 (QVRLE). A Glycyl lysine isopeptide (Lys-Gly) (interchain with G-Cter in ubiquitin) cross-link involves residue lysine 689. Residues serine 727 and serine 734 each carry the phosphoserine modification. 5 LRR repeats span residues 741-761 (SLTE…RVLC), 770-791 (NIQR…NISS), 798-818 (KLVE…RLLC), 827-848 (NLQK…DLAL), and 855-875 (SLTR…QVLC). The KFERQ-like motif 3 motif lies at 797 to 801 (QKLVE). Serine 805 is modified (phosphoserine). S-palmitoyl cysteine attachment occurs at residues cysteine 836, cysteine 837, and cysteine 843. The residue at position 860 (tyrosine 860) is a Phosphotyrosine. Lysine 877 participates in a covalent cross-link: Glycyl lysine isopeptide (Lys-Gly) (interchain with G-Cter in ubiquitin). LRR repeat units follow at residues 884-905 (NLQK…ALTS), 912-932 (NLTH…KLLC), 941-962 (KLQM…DLST), and 969-990 (SLRK…TLCE). The S-palmitoyl cysteine moiety is linked to residue cysteine 957. A Glycyl lysine isopeptide (Lys-Gly) (interchain with G-Cter in ubiquitin) cross-link involves residue lysine 972. The short motif at 990–994 (EVLKQ) is the KFERQ-like motif 4 element. A Phosphoserine modification is found at serine 1034.

It belongs to the NLRP family. As to quaternary structure, sensor component of NLRP3 inflammasomes; inflammasomes are supramolecular complexes that assemble in the cytosol in response to pathogens and other damage-associated signals and play critical roles in innate immunity and inflammation. The core of NLRP3 inflammasomes consists of a signal sensor component (NLRP3), an adapter (PYCARD/ASC), which recruits an effector pro-inflammatory caspase (CASP1 and, possibly, CASP4 and CASP5). Homodecamer; inactive NLRP3 forms homodecameric double-ring cages that hide pyrin domains within NACHT-LRR rings to avoid premature activation. Interacts (via pyrin domain) with PYCARD/ASC (via pyrin domain); interaction is direct. Interacts (via LRR repeat domain) with NEK7 (via N-terminus); the interaction is required for the formation of the complex NLRP3:PYCARD, oligomerization of PYCARD/ASC and activation of CASP1. Interacts (via LRR repeat domain) with NR4A1/Nur77 (via N-terminus); the interaction is direct, requires activation of NR4A1 by its ligands NBRE-containing dsDNA and lipopolysaccharide, and stimulates the association of NLRP3 with NEK7 for non-canonical NLRP3 inflammasome activation. Interacts with CARD8; leading to inhibit formation of the NLRP3 inflammasome. Interacts with MEFV; this interaction targets NLRP3 to degradation by autophagy, hence preventing excessive IL1B- and IL18-mediated inflammation. Interacts with EIF2AK2/PKR; this interaction requires EIF2AK2 activity, is accompanied by EIF2AK2 autophosphorylation and promotes inflammasome assembly in response to specific stimuli. Interacts with GBP5 (via DAPIN domain); this interaction promotes inflammasome assembly in response to microbial and soluble, but not crystalline, agents. Interacts with PML (isoform PML-1) (via the leucine-rich repeat (LRR) domain); PML-mediated increase in NLRP3 inflammasome activation does not depend upon this interaction. Interacts (via NACHT domain) with DHX33 (via DEAH box); NLRP3 activation in presence of cytosolic dsRNA is mediated by DHX33. Interacts (via NACHT and LRR domains) with ARRB2; this interaction is direct and inducible by polyunsaturated fatty acids (PUFAs). Interacts (via NACHT domain) with DDX3X under both LPS-primed and inflammasome-activating conditions. Interacts with IRF4 (via the LRR domain); this interaction is direct and is required for optimal IRF4 binding to IL4 promoter and efficient IL4 transactivation during differentiation of Th2 helper T-cells. Interacts with MAVS; promoting localization to mitochondria and activation of the NLRP3 inflammasome. Interacts with MARK4; promoting localization of NLRP3 to the microtubule organizing center (MTOC). Interacts with TRIM50; this interaction also promotes NLRP3 oligomerization and subsequent inflammasome activation. Interacts with IRGM; preventing NLRP3 inflammasome assembly and promoting NLRP3 degradation. Interacts (via NACHT and LLR domains) with ABHD8; this interaction is enhanced in the presence of NLRP3 inflammasome inducers, such as ATP, nigericin, silica, or alum. Interaction with ABHD8 leads the recruitment of ZDHHC12, hence facilitating NLRP3 palmitoylation and degradation by the chaperone-mediated autophagy pathway (CMA), therefore attenuating NLRP3 inflammasome activation. Post-translationally, phosphorylation by MAPK8/JNK1 increases inflammasome activation by promoting deubiquitination by BRCC3 and NLRP3 homooligomerization. Phosphorylation at Ser-805 by CSNK1A1 prevents inflammasome activation by preventing NEK7 recruitment. Phosphorylation at Ser-5 in the pyrin domain inhibits homomultimerization of NLRP3 and activation of the NLRP3 inflammasome: dephosphorylation by protein phosphatase 2A (PP2A) promotes assembly of the NLRP3 inflammasome. Phosphorylation at Ser-293 by PKD/PRKD1 promotes NLRP3 inflammasome assembly. Phosphorylation by ERK1/MAPK3 promotes NLRP3 inflammasome assembly. Phosphorylation by BTK (at Tyr-134, Tyr-138 and Tyr-166) in the region that mediates binding to phosphatidylinositol phosphate, promotes relocalization of NLRP3 and assembly of the NLRP3 inflammasome. Phosphorylation at Tyr-860 inhibits NLRP3 inflammasome assembly: dephosphorylation by PTPN22 promotes inflammasome activation. Phosphorylated by LATS1 and LATS2 at Ser-263 following palmitoylation by ZDHHC1, promoting its relocalization to the microtubule organizing center (MTOC), where NLRP3 is activated by NEK7, leading to inflammasome assembly and activation. In terms of processing, ubiquitinated; undergoes both 'Lys-48'- and 'Lys-63'-linked polyubiquitination. Ubiquitination does not lead to degradation, but inhibits inflammasome activation. Deubiquitination is catalyzed by BRCC3 and associated with NLRP3 activation and inflammasome assembly. This process can be induced by the activation of Toll-like receptors (by LPS), through a non-transcriptional pathway dependent on the mitochondrial production of reactive oxygen species, and by ATP. Ubiquitinated by TRIM31 via 'Lys-48'-linked ubiquitination, leading to its degradation by the proteasome. Ubiquitinated at Lys-689 by the SCF(FBXL2) complex, leading to its degradation by the proteasome. Ubiquitinated by TRIM35 via 'lys-48' and 'Lys-63'-linked ubiquitination leading to inhibition of NLRP3 inflammasome activation. Undergoes 'Lys-27'-linked polyubiquitination by MARCHF5, leading to NLRP3-NEK7 complex formation and NLRP3 oligomerization. The disulfide bond in the pyrin domain might play a role in reactive oxygen species-mediated activation. Post-translationally, palmitoylation by ZDHHC12 promotes NLRP3 degradation by the chaperone-mediated autophagy pathway (CMA) and therefore limits NLRP3 inflammasome activation. Interaction with ZDHHC12, and hence NLRP3 palmitoylation, is greatly enhanced by ABHD8. Following palmitoylation, HSPA8/HSC70 recognizes and binds the KFERQ-like motifs on NLRP3 and promotes NLRP3 recruitment to lysosomes, where it is degraded via the chaperone-mediated autophagy pathway in a LAMP2-dependent process. Palmitoylation at Cys-836 and Cys-837 by ZDHHC5 enhances its binding to NEK7 leading to inflammasome assembly and activation. Palmitoylation at Cys-128 and Cys-957 by ZDHHC1 facilitates phosphorylation at Ser-263 by LATS1 and LATS2, promoting its relocalization to the microtubule organizing center (MTOC), where NLRP3 is activated by NEK7, leading to inflammasome assembly and activation. Depalmitoylated by ABHD17A. In terms of processing, degraded via selective autophagy following interaction with IRGM. IRGM promotes NLRP3 recruitment to autophagosome membranes, promoting its SQSTM1/p62-dependent autophagy-dependent degradation.

It localises to the cytoplasm. The protein localises to the cytosol. It is found in the inflammasome. The protein resides in the cytoskeleton. Its subcellular location is the microtubule organizing center. It localises to the golgi apparatus membrane. The protein localises to the endoplasmic reticulum. It is found in the mitochondrion. The protein resides in the secreted. Its subcellular location is the nucleus. It carries out the reaction ATP + H2O = ADP + phosphate + H(+). With respect to regulation, under resting conditions, NLRP3 binds ADP and is autoinhibited. Inactive NLRP3 forms homodecameric double-ring cages that hide pyrin domains within NACHT-LRR rings to avoid premature activation. NLRP3 activation stimuli include extracellular ATP, nigericin, reactive oxygen species, crystals of monosodium urate or cholesterol, amyloid-beta fibers, environmental or industrial particles and nanoparticles, such as asbestos, silica, aluminum salts, cytosolic dsRNA, etc. Almost all stimuli trigger intracellular K(+) efflux. These stimuli lead to membrane perturbations that induce activation of NLRP3. Upon activation, NLRP3 is transported to microtubule organizing center (MTOC), where it is unlocked by NEK7, leading to its relocalization to dispersed trans-Golgi network (dTGN) vesicle membranes and recruitment of PYCARD/ASC for the formation of an active inflammasome complex. NEK7-activated NLRP3 forms a disk-shaped inflammasome. NLRP3 and PYCARD/ASC interact via their respective pyrin domains; interaction initiates speck formation (nucleation) which greatly enhances further addition of soluble PYCARD/ASC molecules to the speck in a prion-like polymerization process. Clustered PYCARD/ASC nucleates the formation of CASP1 filaments through the interaction of their respective CARD domains, acting as a platform for CASP1 polymerization and activation. Active CASP1 then processes IL1B and IL18 precursors, leading to the release of mature cytokines in the extracellular milieu and inflammatory response. NLRP3 inflammasome assembly is inhibited by IRGM, which impedes NLRP3 oligomerization. NLRP3 inflammasome is inhibited by cyclic AMP (cAMP), which directly binds NLRP3; inhibition is relieved by calcium-sensing receptor CASR, which inhibits production of cAMP. Specifically inhibited by sulfonylurea MCC950 (also named CP-456,773, CRID3), a potent and specific small-molecule inhibitor of the NLRP3 inflammasome that acts by preventing ATP hydrolysis. In terms of biological role, sensor component of the NLRP3 inflammasome, which mediates inflammasome activation in response to defects in membrane integrity, leading to secretion of inflammatory cytokines IL1B and IL18 and pyroptosis. In response to pathogens and other damage-associated signals that affect the integrity of membranes, initiates the formation of the inflammasome polymeric complex composed of NLRP3, CASP1 and PYCARD/ASC. Recruitment of pro-caspase-1 (proCASP1) to the NLRP3 inflammasome promotes caspase-1 (CASP1) activation, which subsequently cleaves and activates inflammatory cytokines IL1B and IL18 and gasdermin-D (GSDMD), promoting cytokine secretion and pyroptosis. Activation of NLRP3 inflammasome is also required for HMGB1 secretion; stimulating inflammatory responses. Under resting conditions, ADP-bound NLRP3 is autoinhibited. NLRP3 activation stimuli include extracellular ATP, nigericin, reactive oxygen species, crystals of monosodium urate or cholesterol, amyloid-beta fibers, environmental or industrial particles and nanoparticles, such as asbestos, silica, aluminum salts, cytosolic dsRNA, etc. Almost all stimuli trigger intracellular K(+) efflux. These stimuli lead to membrane perturbation and activation of NLRP3. Upon activation, NLRP3 is transported to microtubule organizing center (MTOC), where it is unlocked by NEK7, leading to its relocalization to dispersed trans-Golgi network (dTGN) vesicle membranes and formation of an active inflammasome complex. Associates with dTGN vesicle membranes by binding to phosphatidylinositol 4-phosphate (PtdIns4P). Shows ATPase activity. Its function is as follows. Independently of inflammasome activation, regulates the differentiation of T helper 2 (Th2) cells and has a role in Th2 cell-dependent asthma and tumor growth. During Th2 differentiation, required for optimal IRF4 binding to IL4 promoter and for IRF4-dependent IL4 transcription. Binds to the consensus DNA sequence 5'-GRRGGNRGAG-3'. May also participate in the transcription of IL5, IL13, GATA3, CCR3, CCR4 and MAF. This Rattus norvegicus (Rat) protein is NACHT, LRR and PYD domains-containing protein 3.